The primary structure comprises 31 residues: Photosystem II reaction center protein T (31 aa).

The helical transmembrane segment at 3–23 (SFAYVLILTLAIATLFFAIAF) threads the bilayer.

Belongs to the PsbT family. PSII is composed of 1 copy each of membrane proteins PsbA, PsbB, PsbC, PsbD, PsbE, PsbF, PsbH, PsbI, PsbJ, PsbK, PsbL, PsbM, PsbT, PsbX, PsbY, PsbZ, Psb30/Ycf12, peripheral proteins PsbO, CyanoQ (PsbQ), PsbU, PsbV and a large number of cofactors. It forms dimeric complexes.

The protein localises to the cellular thylakoid membrane. Found at the monomer-monomer interface of the photosystem II (PS II) dimer, plays a role in assembly and dimerization of PSII. PSII is a light-driven water plastoquinone oxidoreductase, using light energy to abstract electrons from H(2)O, generating a proton gradient subsequently used for ATP formation. The chain is Photosystem II reaction center protein T from Parasynechococcus marenigrum (strain WH8102).